Reading from the N-terminus, the 180-residue chain is Ribosome-recycling factor (180 aa).

The protein belongs to the RRF family.

It localises to the cytoplasm. In terms of biological role, responsible for the release of ribosomes from messenger RNA at the termination of protein biosynthesis. May increase the efficiency of translation by recycling ribosomes from one round of translation to another. The polypeptide is Ribosome-recycling factor (Chlamydia felis (strain Fe/C-56) (Chlamydophila felis)).